A 325-amino-acid polypeptide reads, in one-letter code: Methionyl-tRNA formyltransferase (325 aa).

Residue 112–115 (SLLP) participates in (6S)-5,6,7,8-tetrahydrofolate binding.

This sequence belongs to the Fmt family.

It catalyses the reaction L-methionyl-tRNA(fMet) + (6R)-10-formyltetrahydrofolate = N-formyl-L-methionyl-tRNA(fMet) + (6S)-5,6,7,8-tetrahydrofolate + H(+). Functionally, attaches a formyl group to the free amino group of methionyl-tRNA(fMet). The formyl group appears to play a dual role in the initiator identity of N-formylmethionyl-tRNA by promoting its recognition by IF2 and preventing the misappropriation of this tRNA by the elongation apparatus. The sequence is that of Methionyl-tRNA formyltransferase from Roseiflexus sp. (strain RS-1).